The primary structure comprises 673 residues: Methionine--tRNA ligase (673 aa).

Residues 13-23 (PYTNGFCHLGH) carry the 'HIGH' region motif. Residues Cys-144, Cys-147, Cys-156, and Cys-160 each contribute to the Zn(2+) site. The short motif at 325 to 329 (KFSKS) is the 'KMSKS' region element. Lys-328 is an ATP binding site. In terms of domain architecture, tRNA-binding spans 575–673 (DVAKLDLRVG…KDVPEGTKVH (99 aa)).

This sequence belongs to the class-I aminoacyl-tRNA synthetase family. MetG type 1 subfamily. In terms of assembly, homodimer. The cofactor is Zn(2+).

The protein resides in the cytoplasm. It catalyses the reaction tRNA(Met) + L-methionine + ATP = L-methionyl-tRNA(Met) + AMP + diphosphate. In terms of biological role, is required not only for elongation of protein synthesis but also for the initiation of all mRNA translation through initiator tRNA(fMet) aminoacylation. The sequence is that of Methionine--tRNA ligase from Methanocorpusculum labreanum (strain ATCC 43576 / DSM 4855 / Z).